A 114-amino-acid polypeptide reads, in one-letter code: Hydrogenase maturation factor HypA (114 aa).

His2 contacts Ni(2+). 4 residues coordinate Zn(2+): Cys73, Cys76, Cys89, and Cys92.

Belongs to the HypA/HybF family.

In terms of biological role, involved in the maturation of [NiFe] hydrogenases. Required for nickel insertion into the metal center of the hydrogenase. This Desulfitobacterium hafniense (strain DSM 10664 / DCB-2) protein is Hydrogenase maturation factor HypA.